Here is a 954-residue protein sequence, read N- to C-terminus: cGMP-specific 3',5'-cyclic phosphodiesterase alpha (954 aa).

Over 1–259 (MMDTKVDQTI…NTFYSSFPFK (259 aa)) the chain is Cytoplasmic. The helical transmembrane segment at 260–280 (LFLHSLYMIFICFIYFVVLYF) threads the bilayer. The Extracellular portion of the chain corresponds to 281 to 296 (MLLKKIYTHPFIFHLS). The helical transmembrane segment at 297–317 (VLKFLFDIIFFLSFILYPLFL) threads the bilayer. At 318 to 327 (RLKRIDKIIY) the chain is on the cytoplasmic side. The helical transmembrane segment at 328-348 (SSYISSYIFVCVTFLYSFIIF) threads the bilayer. Over 349–365 (KCSSYSVKMNSNTYQNN) the chain is Extracellular. Residues 366–386 (FVFQNMLFLLINIIYICIFCF) form a helical membrane-spanning segment. The Cytoplasmic portion of the chain corresponds to 387-401 (LKNYMILYSFLYNCR). Residues 402–422 (FSIFCILFIFLYYYLFFSLDF) traverse the membrane as a helical segment. Residues 423-432 (YRIIHLPLDN) are Extracellular-facing. A helical transmembrane segment spans residues 433 to 453 (FFFPFLCFLFFSFLFIFKIIM). At 454-954 (SLYYEYVYEK…LSKLELIKFE (501 aa)) the chain is on the cytoplasmic side. The region spanning 586–930 (NQEETKSFLS…ERWESHKNDN (345 aa)) is the PDEase domain. The active-site Proton donor is the His680. 680 to 684 (HTSLH) serves as a coordination point for 3',5'-cyclic GMP. The Zn(2+) site is built by His684, His720, Asp721, and Asp832. Asp721, Asp832, and Gln884 together coordinate 3',5'-cyclic GMP. Asp721 contributes to the Mg(2+) binding site.

It belongs to the cyclic nucleotide phosphodiesterase family. Zn(2+) is required as a cofactor. It depends on Mg(2+) as a cofactor.

It is found in the membrane. It catalyses the reaction 3',5'-cyclic GMP + H2O = GMP + H(+). It participates in purine metabolism; 3',5'-cyclic GMP degradation; GMP from 3',5'-cyclic GMP: step 1/1. With respect to regulation, not inhibited by cAMP. Inhibited by zaprinast. Specifically hydrolyzes the second messenger cGMP, which is a key regulator of many important physiological processes. In Plasmodium falciparum (isolate 3D7), this protein is cGMP-specific 3',5'-cyclic phosphodiesterase alpha.